Reading from the N-terminus, the 862-residue chain is C-type lectin domain-containing protein 161 (862 aa).

A signal peptide spans 1-20; that stretch reads MYRRTTLWFLLLFQPILVFA. Residues Asn22 and Asn91 are each glycosylated (N-linked (GlcNAc...) asparagine). Residues 41–154 enclose the C-type lectin 1 domain; that stretch reads SLNACFKLYN…VGQKLPFVCT (114 aa). A disulfide bridge links Cys62 with Cys153. Residues 162–291 form a disordered region; sequence AGPAPVHAMR…SDESSDEAYD (130 aa). Positions 198-218 are enriched in basic and acidic residues; it reads SDKKEKKEVASDKKKESKKDE. The N-linked (GlcNAc...) asparagine glycan is linked to Asn222. A compositionally biased stretch (basic and acidic residues) spans 242-252; the sequence is SDKKESSKKDE. N-linked (GlcNAc...) asparagine glycans are attached at residues Asn258, Asn279, and Asn352. The segment covering 265-283 has biased composition (low complexity); it reads ANAEMSASISASSANSSSD. Disordered stretches follow at residues 377–437, 450–469, and 474–504; these read MTMR…SASL, ALAS…QKSA, and AVVS…IDES. The span at 388–418 shows a compositional bias: low complexity; that stretch reads SSSNTDSESASISESSQASEQAVMAAAMSAK. Basic and acidic residues-rich tracts occupy residues 455–467 and 478–491; these read SKSD…KDQK and ENKH…DPKS. Asn559 carries N-linked (GlcNAc...) asparagine glycosylation. C-type lectin domains follow at residues 562-687 and 716-828; these read APAL…SVLC and KNGK…FVSV. Cys653 and Cys678 form a disulfide bridge. A glycan (N-linked (GlcNAc...) asparagine) is linked at Asn765. Cys807 and Cys819 are oxidised to a cystine. Residues Asn831 and Asn857 are each glycosylated (N-linked (GlcNAc...) asparagine).

It localises to the secreted. The polypeptide is C-type lectin domain-containing protein 161 (clec-161) (Caenorhabditis elegans).